A 543-amino-acid chain; its full sequence is Cytochrome P450 1B1 (543 aa).

Residue cysteine 470 participates in heme binding.

It belongs to the cytochrome P450 family. Heme is required as a cofactor. Expressed in heart, brain, lung, skeletal muscle, kidney, spleen, thymus, prostate, testis, ovary, small intestine, colon, and peripheral blood leukocytes. Expressed in retinal endothelial cells and umbilical vein endothelial cells (at protein level).

It localises to the endoplasmic reticulum membrane. It is found in the microsome membrane. The protein resides in the mitochondrion. It carries out the reaction an organic molecule + reduced [NADPH--hemoprotein reductase] + O2 = an alcohol + oxidized [NADPH--hemoprotein reductase] + H2O + H(+). The enzyme catalyses 17beta-estradiol + reduced [NADPH--hemoprotein reductase] + O2 = 2-hydroxy-17beta-estradiol + oxidized [NADPH--hemoprotein reductase] + H2O + H(+). The catalysed reaction is 17beta-estradiol + reduced [NADPH--hemoprotein reductase] + O2 = 4-hydroxy-17beta-estradiol + oxidized [NADPH--hemoprotein reductase] + H2O + H(+). It catalyses the reaction estrone + reduced [NADPH--hemoprotein reductase] + O2 = 2-hydroxyestrone + oxidized [NADPH--hemoprotein reductase] + H2O + H(+). It carries out the reaction estrone + reduced [NADPH--hemoprotein reductase] + O2 = 4-hydroxyestrone + oxidized [NADPH--hemoprotein reductase] + H2O + H(+). The enzyme catalyses testosterone + reduced [NADPH--hemoprotein reductase] + O2 = 6beta,17beta-dihydroxyandrost-4-en-3-one + oxidized [NADPH--hemoprotein reductase] + H2O + H(+). The catalysed reaction is progesterone + reduced [NADPH--hemoprotein reductase] + O2 = 6beta-hydroxyprogesterone + oxidized [NADPH--hemoprotein reductase] + H2O + H(+). It catalyses the reaction progesterone + reduced [NADPH--hemoprotein reductase] + O2 = 16alpha-hydroxyprogesterone + oxidized [NADPH--hemoprotein reductase] + H2O + H(+). It carries out the reaction all-trans-retinol + reduced [NADPH--hemoprotein reductase] + O2 = all-trans-retinal + oxidized [NADPH--hemoprotein reductase] + 2 H2O + H(+). The enzyme catalyses all-trans-retinal + reduced [NADPH--hemoprotein reductase] + O2 = all-trans-retinoate + oxidized [NADPH--hemoprotein reductase] + H2O + 2 H(+). The catalysed reaction is (5Z,8Z,11Z,14Z)-eicosatetraenoate + reduced [NADPH--hemoprotein reductase] + O2 = (8R,9S)-epoxy-(5Z,11Z,14Z)-eicosatrienoate + oxidized [NADPH--hemoprotein reductase] + H2O + H(+). It catalyses the reaction (5Z,8Z,11Z,14Z)-eicosatetraenoate + reduced [NADPH--hemoprotein reductase] + O2 = (11R,12S)-epoxy-(5Z,8Z,14Z)-eicosatrienoate + oxidized [NADPH--hemoprotein reductase] + H2O + H(+). It carries out the reaction (5Z,8Z,11Z,14Z)-eicosatetraenoate + reduced [NADPH--hemoprotein reductase] + O2 = (11S,12R)-epoxy-(5Z,8Z,14Z)-eicosatrienoate + oxidized [NADPH--hemoprotein reductase] + H2O + H(+). The enzyme catalyses (5Z,8Z,11Z,14Z)-eicosatetraenoate + reduced [NADPH--hemoprotein reductase] + O2 = (14R,15S)-epoxy-(5Z,8Z,11Z)-eicosatrienoate + oxidized [NADPH--hemoprotein reductase] + H2O + H(+). The catalysed reaction is (5S)-hydroperoxy-(6E,8Z,11Z,14Z)-eicosatetraenoate = 5-oxo-(6E,8Z,11Z,14Z)-eicosatetraenoate + H2O. It catalyses the reaction (12S)-hydroperoxy-(5Z,8Z,10E,14Z)-eicosatetraenoate = 12-oxo-(5Z,8Z,10E,14Z)-eicosatetraenoate + H2O. It carries out the reaction (13S)-hydroperoxy-(9Z,11E)-octadecadienoate = 13-oxo-(9Z,11E)-octadecadienoate + H2O. The enzyme catalyses (15S)-hydroperoxy-(5Z,8Z,11Z,13E)-eicosatetraenoate = 15-oxo-(5Z,8Z,11Z,13E)-eicosatetraenoate + H2O. It functions in the pathway steroid hormone biosynthesis. Its pathway is cofactor metabolism; retinol metabolism. The protein operates within lipid metabolism; arachidonate metabolism. Enzyme activity is increased by liposomes containing anionic phospholipids, phosphatidic acid and cardiolipin. Inhibited by naringenin with an IC(50) of 5 uM. Enzyme activity is increased by cytochrome b5. Its function is as follows. A cytochrome P450 monooxygenase involved in the metabolism of various endogenous substrates, including fatty acids, steroid hormones and vitamins. Mechanistically, uses molecular oxygen inserting one oxygen atom into a substrate, and reducing the second into a water molecule, with two electrons provided by NADPH via cytochrome P450 reductase (NADPH--hemoprotein reductase). Exhibits catalytic activity for the formation of hydroxyestrogens from estrone (E1) and 17beta-estradiol (E2), namely 2- and 4-hydroxy E1 and E2. Displays a predominant hydroxylase activity toward E2 at the C-4 position. Metabolizes testosterone and progesterone to B or D ring hydroxylated metabolites. May act as a major enzyme for all-trans retinoic acid biosynthesis in extrahepatic tissues. Catalyzes two successive oxidative transformation of all-trans retinol to all-trans retinal and then to the active form all-trans retinoic acid. Catalyzes the epoxidation of double bonds of certain PUFA. Converts arachidonic acid toward epoxyeicosatrienoic acid (EpETrE) regioisomers, 8,9-, 11,12-, and 14,15- EpETrE, that function as lipid mediators in the vascular system. Additionally, displays dehydratase activity toward oxygenated eicosanoids hydroperoxyeicosatetraenoates (HpETEs). This activity is independent of cytochrome P450 reductase, NADPH, and O2. Also involved in the oxidative metabolism of xenobiotics, particularly converting polycyclic aromatic hydrocarbons and heterocyclic aryl amines procarcinogens to DNA-damaging products. Plays an important role in retinal vascular development. Under hyperoxic O2 conditions, promotes retinal angiogenesis and capillary morphogenesis, likely by metabolizing the oxygenated products generated during the oxidative stress. Also, contributes to oxidative homeostasis and ultrastructural organization and function of trabecular meshwork tissue through modulation of POSTN expression. The polypeptide is Cytochrome P450 1B1 (Homo sapiens (Human)).